A 58-amino-acid chain; its full sequence is KappaPI-actitoxin-Avd3b (58 aa).

Residues 5 to 55 (CLLPMDVGRCRASHPRYYYNSSSKRCEKFIYGGCRGNANNFHTLEECEKVC) form the BPTI/Kunitz inhibitor domain. 3 disulfides stabilise this stretch: Cys-5–Cys-55, Cys-14–Cys-38, and Cys-30–Cys-51.

Belongs to the venom Kunitz-type family. Sea anemone type 2 potassium channel toxin subfamily.

It localises to the secreted. The protein resides in the nematocyst. In terms of biological role, dual-function toxin that inhibits both the serine protease trypsin (Kd&lt;30 nM) and voltage-gated potassium channels Kv1.2/KCNA2 (IC(50)=2800 nM). In Anemonia sulcata (Mediterranean snakelocks sea anemone), this protein is KappaPI-actitoxin-Avd3b.